A 537-amino-acid polypeptide reads, in one-letter code: Eukaryotic translation initiation factor 3 subunit L (537 aa).

Residues 301-513 (TFSSILLYIQ…IHIADTKVSH (213 aa)) enclose the PCI domain.

The protein belongs to the eIF-3 subunit L family. In terms of assembly, component of the eukaryotic translation initiation factor 3 (eIF-3) complex.

The protein resides in the cytoplasm. Component of the eukaryotic translation initiation factor 3 (eIF-3) complex, which is involved in protein synthesis of a specialized repertoire of mRNAs and, together with other initiation factors, stimulates binding of mRNA and methionyl-tRNAi to the 40S ribosome. The eIF-3 complex specifically targets and initiates translation of a subset of mRNAs involved in cell proliferation. The protein is Eukaryotic translation initiation factor 3 subunit L of Aedes aegypti (Yellowfever mosquito).